A 585-amino-acid chain; its full sequence is Arginine--tRNA ligase (585 aa).

The 'HIGH' region motif lies at 131-141; the sequence is ANPTGPMHVGH.

The protein belongs to the class-I aminoacyl-tRNA synthetase family. Monomer.

Its subcellular location is the cytoplasm. The catalysed reaction is tRNA(Arg) + L-arginine + ATP = L-arginyl-tRNA(Arg) + AMP + diphosphate. The polypeptide is Arginine--tRNA ligase (Chelativorans sp. (strain BNC1)).